The following is a 502-amino-acid chain: Probable cytosol aminopeptidase (502 aa).

Lysine 269 and aspartate 274 together coordinate Mn(2+). Lysine 281 is a catalytic residue. Mn(2+) is bound by residues aspartate 292, aspartate 351, and glutamate 353. The active site involves arginine 355.

The protein belongs to the peptidase M17 family. Requires Mn(2+) as cofactor.

The protein localises to the cytoplasm. It carries out the reaction Release of an N-terminal amino acid, Xaa-|-Yaa-, in which Xaa is preferably Leu, but may be other amino acids including Pro although not Arg or Lys, and Yaa may be Pro. Amino acid amides and methyl esters are also readily hydrolyzed, but rates on arylamides are exceedingly low.. It catalyses the reaction Release of an N-terminal amino acid, preferentially leucine, but not glutamic or aspartic acids.. Its function is as follows. Presumably involved in the processing and regular turnover of intracellular proteins. Catalyzes the removal of unsubstituted N-terminal amino acids from various peptides. This Shewanella loihica (strain ATCC BAA-1088 / PV-4) protein is Probable cytosol aminopeptidase.